The following is a 269-amino-acid chain: Tryptophan synthase alpha chain (269 aa).

Catalysis depends on proton acceptor residues Glu-49 and Asp-60.

The protein belongs to the TrpA family. As to quaternary structure, tetramer of two alpha and two beta chains.

It catalyses the reaction (1S,2R)-1-C-(indol-3-yl)glycerol 3-phosphate + L-serine = D-glyceraldehyde 3-phosphate + L-tryptophan + H2O. It functions in the pathway amino-acid biosynthesis; L-tryptophan biosynthesis; L-tryptophan from chorismate: step 5/5. Functionally, the alpha subunit is responsible for the aldol cleavage of indoleglycerol phosphate to indole and glyceraldehyde 3-phosphate. The chain is Tryptophan synthase alpha chain from Pseudomonas putida (strain ATCC 47054 / DSM 6125 / CFBP 8728 / NCIMB 11950 / KT2440).